A 298-amino-acid polypeptide reads, in one-letter code: Riboflavin transporter (298 aa).

9 helical membrane passes run 8–28 (LQGA…NSVA), 35–55 (FGLP…VVIL), 79–99 (VFLA…PVPI), 101–121 (QGIA…GLWL), 125–145 (VGMA…IILE), 151–171 (FNLA…YSLM), 184–204 (MVVY…LPDW), 211–231 (TVWL…WAIA), and 258–278 (WLVF…IIVL). 2 EamA domains span residues 10–144 (GALW…MIIL) and 156–284 (LLPV…AFIT).

Belongs to the drug/metabolite transporter (DMT) superfamily. 10 TMS drug/metabolite exporter (DME) (TC 2.A.7.3) family.

It is found in the cell membrane. Transports riboflavin into the cell. The polypeptide is Riboflavin transporter (Vibrio cholerae serotype O1 (strain ATCC 39315 / El Tor Inaba N16961)).